Consider the following 126-residue polypeptide: Small ribosomal subunit protein uS12 (126 aa).

Aspartate 89 is modified (3-methylthioaspartic acid).

Belongs to the universal ribosomal protein uS12 family. In terms of assembly, part of the 30S ribosomal subunit. Contacts proteins S8 and S17. May interact with IF1 in the 30S initiation complex.

Its function is as follows. With S4 and S5 plays an important role in translational accuracy. Functionally, interacts with and stabilizes bases of the 16S rRNA that are involved in tRNA selection in the A site and with the mRNA backbone. Located at the interface of the 30S and 50S subunits, it traverses the body of the 30S subunit contacting proteins on the other side and probably holding the rRNA structure together. The combined cluster of proteins S8, S12 and S17 appears to hold together the shoulder and platform of the 30S subunit. The polypeptide is Small ribosomal subunit protein uS12 (Polynucleobacter asymbioticus (strain DSM 18221 / CIP 109841 / QLW-P1DMWA-1) (Polynucleobacter necessarius subsp. asymbioticus)).